Reading from the N-terminus, the 506-residue chain is Histidine ammonia-lyase (506 aa).

Positions 142-144 (ASG) form a cross-link, 5-imidazolinone (Ala-Gly). Residue S143 is modified to 2,3-didehydroalanine (Ser).

Belongs to the PAL/histidase family. Post-translationally, contains an active site 4-methylidene-imidazol-5-one (MIO), which is formed autocatalytically by cyclization and dehydration of residues Ala-Ser-Gly.

Its subcellular location is the cytoplasm. It carries out the reaction L-histidine = trans-urocanate + NH4(+). It participates in amino-acid degradation; L-histidine degradation into L-glutamate; N-formimidoyl-L-glutamate from L-histidine: step 1/3. The chain is Histidine ammonia-lyase from Bacillus cereus (strain B4264).